We begin with the raw amino-acid sequence, 305 residues long: MIRQRTLKEIVKTTGVGLHSGRKVTLTLRPAAANTGIIYRRTDVNPPVDFPADPASVRDTMLCTALVNDQGVRISTVEHLNAALAGMGIDNAIIEVDAPEIPIMDGSASPFVYLLQQAGIQTLNAPKRFIRIKKPVRIEDGDKWAEFVPFNGFRMDFEIEFNHPAIDGDDQRLVFDFSSQGFVKEISRARTFGFMRDIEYLQSQNLCLGGSFDCAIVLDDYRILNEEGLRFDNEFVTHKVLDAIGDLYMAGHAIVGEFRAYKSGHGLNNQLLRAVLADQEAWEWATFEEEVGSPVAFAEPNMVLA.

3 residues coordinate Zn(2+): His79, His238, and Asp242. His265 (proton donor) is an active-site residue.

The protein belongs to the LpxC family. Zn(2+) is required as a cofactor.

The enzyme catalyses a UDP-3-O-[(3R)-3-hydroxyacyl]-N-acetyl-alpha-D-glucosamine + H2O = a UDP-3-O-[(3R)-3-hydroxyacyl]-alpha-D-glucosamine + acetate. The protein operates within glycolipid biosynthesis; lipid IV(A) biosynthesis; lipid IV(A) from (3R)-3-hydroxytetradecanoyl-[acyl-carrier-protein] and UDP-N-acetyl-alpha-D-glucosamine: step 2/6. Functionally, catalyzes the hydrolysis of UDP-3-O-myristoyl-N-acetylglucosamine to form UDP-3-O-myristoylglucosamine and acetate, the committed step in lipid A biosynthesis. The chain is UDP-3-O-acyl-N-acetylglucosamine deacetylase from Vibrio cholerae serotype O1 (strain ATCC 39541 / Classical Ogawa 395 / O395).